Reading from the N-terminus, the 192-residue chain is Thymidine kinase (192 aa).

ATP contacts are provided by residues 9–16 (STMNAGKS) and 87–90 (DEAQ). The active-site Proton acceptor is Glu-88. Residues Cys-145, Cys-147, Cys-182, and His-185 each contribute to the Zn(2+) site.

Belongs to the thymidine kinase family. In terms of assembly, homotetramer.

It localises to the cytoplasm. The catalysed reaction is thymidine + ATP = dTMP + ADP + H(+). The sequence is that of Thymidine kinase from Pasteurella multocida (strain Pm70).